Here is a 457-residue protein sequence, read N- to C-terminus: TnpB-like protein ORF457 (457 aa).

The disordered stretch occupies residues 1–22; sequence MPPSSGQLLGDEEREPTSTPAI.

It in the N-terminal section; belongs to the transposase 2 family. The protein in the C-terminal section; belongs to the transposase 35 family.

In Acidianus two-tailed virus (ATV), this protein is TnpB-like protein ORF457.